The following is a 142-amino-acid chain: Galactose-6-phosphate isomerase subunit LacA 2 (142 aa).

This sequence belongs to the LacAB/RpiB family. Heteromultimeric protein consisting of LacA and LacB.

It carries out the reaction aldehydo-D-galactose 6-phosphate = keto-D-tagatose 6-phosphate. Its pathway is carbohydrate metabolism; D-galactose 6-phosphate degradation; D-tagatose 6-phosphate from D-galactose 6-phosphate: step 1/1. This chain is Galactose-6-phosphate isomerase subunit LacA 2, found in Streptococcus pyogenes serotype M1.